A 753-amino-acid chain; its full sequence is Probable dipeptidyl peptidase 4 (753 aa).

An N-terminal signal peptide occupies residues 1 to 18 (MKTSQFLSLLLLAGIAQA). N-linked (GlcNAc...) asparagine glycosylation is found at asparagine 84, asparagine 114, and asparagine 222. Active-site charge relay system residues include serine 616, aspartate 668, and histidine 703.

This sequence belongs to the peptidase S9B family.

The protein resides in the secreted. The catalysed reaction is Release of an N-terminal dipeptide, Xaa-Yaa-|-Zaa-, from a polypeptide, preferentially when Yaa is Pro, provided Zaa is neither Pro nor hydroxyproline.. Extracellular dipeptidyl-peptidase which removes N-terminal dipeptides sequentially from polypeptides having unsubstituted N-termini provided that the penultimate residue is proline. Contributes to pathogenicity. The protein is Probable dipeptidyl peptidase 4 (DPP4) of Trichophyton verrucosum (strain HKI 0517).